We begin with the raw amino-acid sequence, 149 residues long: Large ribosomal subunit protein bL9 (149 aa).

It belongs to the bacterial ribosomal protein bL9 family.

In terms of biological role, binds to the 23S rRNA. This chain is Large ribosomal subunit protein bL9, found in Clostridioides difficile (strain 630) (Peptoclostridium difficile).